Here is a 375-residue protein sequence, read N- to C-terminus: Probable UDP-N-acetylglucosamine 2-epimerase (375 aa).

Belongs to the UDP-N-acetylglucosamine 2-epimerase family.

The protein resides in the cytoplasm. The enzyme catalyses UDP-N-acetyl-alpha-D-glucosamine = UDP-N-acetyl-alpha-D-mannosamine. It functions in the pathway glycan metabolism; exopolysaccharide EPS I biosynthesis. In terms of biological role, may be involved in synthesis of N-acetyltrideoxygalactose, a component of exopolysaccharide EPS I which functions as a virulence factor. The sequence is that of Probable UDP-N-acetylglucosamine 2-epimerase (epsC) from Ralstonia nicotianae (strain ATCC BAA-1114 / GMI1000) (Ralstonia solanacearum).